The sequence spans 395 residues: Elongation factor Tu (395 aa).

The tr-type G domain occupies 10–204 (KPHVNIGTIG…AVDEYIPTPQ (195 aa)). The G1 stretch occupies residues 19-26 (GHVDHGKT). 19–26 (GHVDHGKT) provides a ligand contact to GTP. Thr26 is a binding site for Mg(2+). Residues 60–64 (GITIS) form a G2 region. The G3 stretch occupies residues 81–84 (DCPG). GTP contacts are provided by residues 81–85 (DCPGH) and 136–139 (NKCD). Positions 136 to 139 (NKCD) are G4. Residues 174-176 (SAL) are G5.

Belongs to the TRAFAC class translation factor GTPase superfamily. Classic translation factor GTPase family. EF-Tu/EF-1A subfamily. Monomer.

The protein localises to the cytoplasm. The enzyme catalyses GTP + H2O = GDP + phosphate + H(+). GTP hydrolase that promotes the GTP-dependent binding of aminoacyl-tRNA to the A-site of ribosomes during protein biosynthesis. This is Elongation factor Tu from Geobacillus sp. (strain WCH70).